The chain runs to 38 residues: Iota-conotoxin-like L11.5 (38 aa).

Cystine bridges form between Cys5–Cys19, Cys12–Cys24, Cys18–Cys29, and Cys23–Cys36.

It belongs to the conotoxin I1 superfamily. In terms of tissue distribution, expressed by the venom duct.

It is found in the secreted. Iota-conotoxins bind to voltage-gated sodium channels (Nav) and act as agonists by shifting the voltage-dependence of activation to more hyperpolarized levels. Produces general excitatory symptoms. The sequence is that of Iota-conotoxin-like L11.5 from Conus lynceus (Lynceus cone).